The primary structure comprises 299 residues: Lysine exporter LysO (299 aa).

8 helical membrane-spanning segments follow: residues 1–21, 31–51, 58–78, 109–129, 131–151, 169–189, 207–227, and 277–297; these read MFSG…IPLR, QLLS…LAFL, LLAI…CNIA, LKLC…LAFL, HATE…GIQL, IVAV…AFIL, SLSG…AAFF, and PAAI…IAFF.

Belongs to the LysO family.

It localises to the cell inner membrane. In terms of biological role, mediates export of lysine. The chain is Lysine exporter LysO from Escherichia coli (strain K12).